We begin with the raw amino-acid sequence, 196 residues long: GTP cyclohydrolase 1 (196 aa).

Cysteine 84, histidine 87, and cysteine 157 together coordinate Zn(2+).

It belongs to the GTP cyclohydrolase I family. Toroid-shaped homodecamer, composed of two pentamers of five dimers.

The catalysed reaction is GTP + H2O = 7,8-dihydroneopterin 3'-triphosphate + formate + H(+). It participates in cofactor biosynthesis; 7,8-dihydroneopterin triphosphate biosynthesis; 7,8-dihydroneopterin triphosphate from GTP: step 1/1. The sequence is that of GTP cyclohydrolase 1 from Corynebacterium glutamicum (strain R).